Consider the following 102-residue polypeptide: MVNPKHHIFVCTSCRLNGKQQGFCYSKNSVEIVETFMEELDSRDLSSEVMVNNTGCFGICSQGPIVVVYPEGVWYGNVTADDVEEIVESHIENGEVVKRLQI.

[2Fe-2S] cluster-binding residues include Cys-11, Cys-24, Cys-56, and Cys-60.

The protein belongs to the 2Fe2S Shethna-type ferredoxin family. Requires [2Fe-2S] cluster as cofactor.

In terms of biological role, ferredoxins are iron-sulfur proteins that transfer electrons in a wide variety of metabolic reactions. The protein is Ferredoxin, 2Fe-2S of Clostridium pasteurianum.